The following is a 261-amino-acid chain: Hemin import ATP-binding protein HmuV (261 aa).

The region spanning 7 to 243 (LRGQNLSLQF…EIIDAVYGYK (237 aa)) is the ABC transporter domain. ATP is bound at residue 39–46 (GPNGAGKS).

Belongs to the ABC transporter superfamily. Heme (hemin) importer (TC 3.A.1.14.5) family. As to quaternary structure, the complex is composed of two ATP-binding proteins (HmuV), two transmembrane proteins (HmuU) and a solute-binding protein (HmuT).

It is found in the cell inner membrane. Its function is as follows. Part of the ABC transporter complex HmuTUV involved in hemin import. Responsible for energy coupling to the transport system. In Vibrio vulnificus (strain YJ016), this protein is Hemin import ATP-binding protein HmuV.